We begin with the raw amino-acid sequence, 216 residues long: Large ribosomal subunit protein uL1 (216 aa).

Belongs to the universal ribosomal protein uL1 family. As to quaternary structure, part of the 50S ribosomal subunit.

Its function is as follows. Binds directly to 23S rRNA. Probably involved in E site tRNA release. In terms of biological role, protein L1 is also a translational repressor protein, it controls the translation of its operon by binding to its mRNA. This chain is Large ribosomal subunit protein uL1, found in Thermococcus kodakarensis (strain ATCC BAA-918 / JCM 12380 / KOD1) (Pyrococcus kodakaraensis (strain KOD1)).